The chain runs to 254 residues: Probable triosephosphate isomerase 2 (254 aa).

9–11 (NMK) is a substrate binding site. H96 functions as the Electrophile in the catalytic mechanism. The active-site Proton acceptor is the E168. Residues G174 and S212 each coordinate substrate.

This sequence belongs to the triosephosphate isomerase family. In terms of assembly, homodimer.

It localises to the cytoplasm. It carries out the reaction D-glyceraldehyde 3-phosphate = dihydroxyacetone phosphate. The protein operates within carbohydrate biosynthesis; gluconeogenesis. It participates in carbohydrate degradation; glycolysis; D-glyceraldehyde 3-phosphate from glycerone phosphate: step 1/1. Involved in the gluconeogenesis. Catalyzes stereospecifically the conversion of dihydroxyacetone phosphate (DHAP) to D-glyceraldehyde-3-phosphate (G3P). The chain is Probable triosephosphate isomerase 2 from Listeria monocytogenes serovar 1/2a (strain ATCC BAA-679 / EGD-e).